Consider the following 509-residue polypeptide: Thymus-specific serine protease (509 aa).

The signal sequence occupies residues 1–22; the sequence is MAVKAPWLGFLLLVSLWGLSTP. N-linked (GlcNAc...) asparagine glycosylation is found at asparagine 69 and asparagine 171. Residue serine 184 is the Charge relay system of the active site. Asparagine 320 is a glycosylation site (N-linked (GlcNAc...) asparagine). Catalysis depends on charge relay system residues aspartate 446 and histidine 471.

The protein belongs to the peptidase S28 family. In terms of tissue distribution, expressed predominantly in cortical thymic epithelial cells, with highest expression around vessels and the thymic capsule.

It localises to the cytoplasmic vesicle. Functionally, protease that may play a role in T-cell development. The polypeptide is Thymus-specific serine protease (Prss16) (Mus musculus (Mouse)).